The sequence spans 222 residues: Flagellar L-ring protein (222 aa).

Positions 1–18 (MRRPGAAALAAAALALAG) are cleaved as a signal peptide. Cys19 is lipidated: N-palmitoyl cysteine. Residue Cys19 is the site of S-diacylglycerol cysteine attachment.

This sequence belongs to the FlgH family. The basal body constitutes a major portion of the flagellar organelle and consists of four rings (L,P,S, and M) mounted on a central rod.

The protein resides in the cell outer membrane. It is found in the bacterial flagellum basal body. Assembles around the rod to form the L-ring and probably protects the motor/basal body from shearing forces during rotation. This Burkholderia mallei (strain ATCC 23344) protein is Flagellar L-ring protein.